The primary structure comprises 824 residues: Leucine--tRNA ligase (824 aa).

A 'HIGH' region motif is present at residues 42–52 (PYPSGRIHMGH). A 'KMSKS' region motif is present at residues 581–585 (KMSKS). Lys584 contacts ATP.

Belongs to the class-I aminoacyl-tRNA synthetase family.

Its subcellular location is the cytoplasm. It catalyses the reaction tRNA(Leu) + L-leucine + ATP = L-leucyl-tRNA(Leu) + AMP + diphosphate. This Geotalea uraniireducens (strain Rf4) (Geobacter uraniireducens) protein is Leucine--tRNA ligase.